The sequence spans 1199 residues: DNA-directed RNA polymerase subunit beta' (1199 aa).

Zn(2+) is bound by residues Cys60, Cys62, Cys75, and Cys78. Asp449, Asp451, and Asp453 together coordinate Mg(2+). 4 residues coordinate Zn(2+): Cys818, Cys892, Cys899, and Cys902.

It belongs to the RNA polymerase beta' chain family. The RNAP catalytic core consists of 2 alpha, 1 beta, 1 beta' and 1 omega subunit. When a sigma factor is associated with the core the holoenzyme is formed, which can initiate transcription. It depends on Mg(2+) as a cofactor. Zn(2+) serves as cofactor.

The enzyme catalyses RNA(n) + a ribonucleoside 5'-triphosphate = RNA(n+1) + diphosphate. DNA-dependent RNA polymerase catalyzes the transcription of DNA into RNA using the four ribonucleoside triphosphates as substrates. The polypeptide is DNA-directed RNA polymerase subunit beta' (Bacillus licheniformis (strain ATCC 14580 / DSM 13 / JCM 2505 / CCUG 7422 / NBRC 12200 / NCIMB 9375 / NCTC 10341 / NRRL NRS-1264 / Gibson 46)).